Here is a 378-residue protein sequence, read N- to C-terminus: tRNA-specific 2-thiouridylase MnmA (378 aa).

Residues 7–14 (GLSGGVDS) and M33 contribute to the ATP site. The tract at residues 102 to 104 (NPD) is interaction with target base in tRNA. The Nucleophile role is filled by C107. C107 and C209 are oxidised to a cystine. G132 contributes to the ATP binding site. Residues 159 to 161 (KDQ) are interaction with tRNA. C209 functions as the Cysteine persulfide intermediate in the catalytic mechanism. The segment at 316–317 (RY) is interaction with tRNA.

It belongs to the MnmA/TRMU family.

It localises to the cytoplasm. The catalysed reaction is S-sulfanyl-L-cysteinyl-[protein] + uridine(34) in tRNA + AH2 + ATP = 2-thiouridine(34) in tRNA + L-cysteinyl-[protein] + A + AMP + diphosphate + H(+). Catalyzes the 2-thiolation of uridine at the wobble position (U34) of tRNA, leading to the formation of s(2)U34. This chain is tRNA-specific 2-thiouridylase MnmA, found in Aster yellows witches'-broom phytoplasma (strain AYWB).